A 238-amino-acid polypeptide reads, in one-letter code: Nicotinamide/nicotinic acid mononucleotide adenylyltransferase (238 aa).

Ser-29 and Phe-30 together coordinate NAD(+). ATP is bound by residues His-37 and Lys-70. The NAD(+) site is built by Thr-107, Gly-136, Asp-138, Trp-149, Arg-168, and Asn-199. 204–205 contacts ATP; that stretch reads SR.

Belongs to the eukaryotic NMN adenylyltransferase family. The cofactor is a divalent metal cation.

It is found in the nucleus. It carries out the reaction beta-nicotinamide D-ribonucleotide + ATP + H(+) = diphosphate + NAD(+). The enzyme catalyses nicotinate beta-D-ribonucleotide + ATP + H(+) = deamido-NAD(+) + diphosphate. Its pathway is cofactor biosynthesis; NAD(+) biosynthesis; deamido-NAD(+) from nicotinate D-ribonucleotide: step 1/1. It functions in the pathway cofactor biosynthesis; NAD(+) biosynthesis; NAD(+) from nicotinamide D-ribonucleotide: step 1/1. Functionally, catalyzes the formation of NAD(+) from nicotinamide mononucleotide (NMN) and ATP. Can also use the deamidated form; nicotinic acid mononucleotide (NaMN) as substrate. The polypeptide is Nicotinamide/nicotinic acid mononucleotide adenylyltransferase (NMNAT) (Arabidopsis thaliana (Mouse-ear cress)).